Here is a 342-residue protein sequence, read N- to C-terminus: Heat-inducible transcription repressor HrcA (342 aa).

It belongs to the HrcA family.

Negative regulator of class I heat shock genes (grpE-dnaK-dnaJ and groELS operons). Prevents heat-shock induction of these operons. The protein is Heat-inducible transcription repressor HrcA of Onion yellows phytoplasma (strain OY-M).